Reading from the N-terminus, the 327-residue chain is Acetyl-coenzyme A carboxylase carboxyl transferase subunit beta (327 aa).

The CoA carboxyltransferase N-terminal domain occupies Leu-24–Pro-293. Positions Pro-293–Gly-311 are enriched in low complexity. Positions Pro-293–Ala-327 are disordered. The span at Ala-312 to Ala-327 shows a compositional bias: pro residues.

The protein belongs to the AccD/PCCB family. Acetyl-CoA carboxylase is a heterohexamer composed of biotin carboxyl carrier protein (AccB), biotin carboxylase (AccC) and two subunits each of ACCase subunit alpha (AccA) and ACCase subunit beta (AccD).

Its subcellular location is the cytoplasm. The enzyme catalyses N(6)-carboxybiotinyl-L-lysyl-[protein] + acetyl-CoA = N(6)-biotinyl-L-lysyl-[protein] + malonyl-CoA. It functions in the pathway lipid metabolism; malonyl-CoA biosynthesis; malonyl-CoA from acetyl-CoA: step 1/1. In terms of biological role, component of the acetyl coenzyme A carboxylase (ACC) complex. Biotin carboxylase (BC) catalyzes the carboxylation of biotin on its carrier protein (BCCP) and then the CO(2) group is transferred by the transcarboxylase to acetyl-CoA to form malonyl-CoA. The polypeptide is Acetyl-coenzyme A carboxylase carboxyl transferase subunit beta (Rhodopseudomonas palustris (strain ATCC BAA-98 / CGA009)).